The chain runs to 429 residues: Enolase (429 aa).

Gln-167 is a (2R)-2-phosphoglycerate binding site. The active-site Proton donor is Glu-209. Residues Asp-246, Glu-289, and Asp-316 each coordinate Mg(2+). Lys-341, Arg-370, Ser-371, and Lys-392 together coordinate (2R)-2-phosphoglycerate. The active-site Proton acceptor is Lys-341.

Belongs to the enolase family. Component of the RNA degradosome, a multiprotein complex involved in RNA processing and mRNA degradation. It depends on Mg(2+) as a cofactor.

The protein localises to the cytoplasm. It is found in the secreted. Its subcellular location is the cell surface. The catalysed reaction is (2R)-2-phosphoglycerate = phosphoenolpyruvate + H2O. The protein operates within carbohydrate degradation; glycolysis; pyruvate from D-glyceraldehyde 3-phosphate: step 4/5. Functionally, catalyzes the reversible conversion of 2-phosphoglycerate (2-PG) into phosphoenolpyruvate (PEP). It is essential for the degradation of carbohydrates via glycolysis. The polypeptide is Enolase (Pseudomonas aeruginosa (strain LESB58)).